Here is an 85-residue protein sequence, read N- to C-terminus: Small ribosomal subunit protein bS16 (85 aa).

This sequence belongs to the bacterial ribosomal protein bS16 family.

The protein is Small ribosomal subunit protein bS16 of Neorickettsia sennetsu (strain ATCC VR-367 / Miyayama) (Ehrlichia sennetsu).